The primary structure comprises 317 residues: Zinc metalloproteinase/disintegrin (317 aa).

The propeptide occupies 1 to 26; sequence EAPKMCGVTQNWESYEPIKKASQSNL. The 197-residue stretch at 32–228 folds into the Peptidase M12B domain; that stretch reads RYIELVIVAD…QKPQCILNKP (197 aa). Glu35 and Asp119 together coordinate Ca(2+). 3 cysteine pairs are disulfide-bonded: Cys143/Cys223, Cys183/Cys207, and Cys185/Cys190. Residue His168 participates in Zn(2+) binding. Residue Glu169 is part of the active site. The Zn(2+) site is built by His172 and His178. Residues Cys223 and Asn226 each contribute to the Ca(2+) site. A propeptide spanning residues 229–244 is cleaved from the precursor; that stretch reads LRTDTVSTPVSGNELL. The Disintegrin domain occupies 236–317; that stretch reads TPVSGNELLE…AGCPRNPFHA (82 aa). Disulfide bonds link Cys250–Cys259, Cys252–Cys260, Cys265–Cys279, Cys273–Cys303, Cys278–Cys282, and Cys291–Cys310. The short motif at 295–297 is the Cell attachment site element; the sequence is RGD.

Belongs to the venom metalloproteinase (M12B) family. P-II subfamily. P-IIa sub-subfamily. As to quaternary structure, monomer. The cofactor is Zn(2+). As to expression, expressed by the venom gland.

Its subcellular location is the secreted. Functionally, metalloproteinase that impairs hemostasis in the envenomed animal. In terms of biological role, inhibits GPIIb/GPIIIa (ITGA2B/ITGB3) binding to immobilized fibrinogen with an IC(50) of 2.2 nM and ADP-induced platelet aggregation with an IC(50) of 131 nM, respectively. Inhibits angiogenesis. By binding to vitronectin receptor (alpha-V/beta-3 (ITGAV/ITGB3)), also induces apoptosis of endothelial cells by blocking their attachment to extracellular matrix proteins. Inhibits platelet aggregation induced by ADP (IC(50) is 30 nM), collagen (IC(50) is 500 nM), thrombin and epinephrin (IC(50) is 160 nM). In Gloydius brevicauda (Korean slamosa snake), this protein is Zinc metalloproteinase/disintegrin.